The chain runs to 283 residues: Protein canopy homolog 3 (283 aa).

The first 35 residues, 1–35 (MEPLPEPTSRPRLRPRPRCLLLLPLLLLLLLLLPA), serve as a signal peptide directing secretion. A Saposin B-type domain is found at 55-276 (SKCEVCKYVA…EGIQKASPLT (222 aa)). Asparagine 161 carries an N-linked (GlcNAc...) asparagine glycan. The stretch at 161-187 (NETSAEVADLKKQCDVLVEEFEEVIED) forms a coiled coil. The interval 223–283 (KGDTAALGGK…PLTHSPPDEL (61 aa)) is disordered.

Belongs to the canopy family. As to quaternary structure, interacts with HSP90B1; this interaction is disrupted in the presence of ATP. Interacts with TLR1, TLR2, TLR4 and TLR9.

Its subcellular location is the endoplasmic reticulum. Functionally, toll-like receptor (TLR)-specific co-chaperone for HSP90B1. Required for proper TLR folding, except that of TLR3, and hence controls TLR exit from the endoplasmic reticulum. Consequently, required for both innate and adaptive immune responses. The sequence is that of Protein canopy homolog 3 (CNPY3) from Sus scrofa (Pig).